We begin with the raw amino-acid sequence, 751 residues long: Catalase-peroxidase (751 aa).

The disordered stretch occupies residues 1–21 (MSNESKCPFHQTAGGGTTNRD). A cross-link (tryptophyl-tyrosyl-methioninium (Trp-Tyr) (with M-270)) is located at residues 90-244 (WHSAGTYRIG…LAAVQMGLIY (155 aa)). The Proton acceptor role is filled by H91. Positions 244-270 (YVNPEGPEGNPDPVASGKDIRETFGRM) form a cross-link, tryptophyl-tyrosyl-methioninium (Tyr-Met) (with W-90). H285 provides a ligand contact to heme b. The segment at 365–390 (AHQWRPKEGKGAGTVPDAHDPGKKHA) is disordered.

This sequence belongs to the peroxidase family. Peroxidase/catalase subfamily. As to quaternary structure, homodimer or homotetramer. Heme b serves as cofactor. In terms of processing, formation of the three residue Trp-Tyr-Met cross-link is important for the catalase, but not the peroxidase activity of the enzyme.

It catalyses the reaction H2O2 + AH2 = A + 2 H2O. The enzyme catalyses 2 H2O2 = O2 + 2 H2O. Bifunctional enzyme with both catalase and broad-spectrum peroxidase activity. The chain is Catalase-peroxidase from Pseudomonas putida (strain GB-1).